Here is a 1522-residue protein sequence, read N- to C-terminus: Adhesion G protein-coupled receptor B3 (1522 aa).

The first 25 residues, Met1–Ala25, serve as a signal peptide directing secretion. The Extracellular segment spans residues Gln26–Thr880. The CUB domain occupies Cys30–Asn159. 5 N-linked (GlcNAc...) asparagine glycosylation sites follow: Asn51, Asn54, Asn82, Asn105, and Asn241. TSP type-1 domains lie at Glu291–Pro343, His345–Pro398, Asp400–Thr453, and Asn455–Pro508. 14 cysteine pairs are disulfide-bonded: Cys303/Cys336, Cys307/Cys342, Cys318/Cys326, Cys357/Cys392, Cys361/Cys397, Cys372/Cys382, Cys412/Cys447, Cys416/Cys452, Cys427/Cys437, Cys467/Cys502, Cys471/Cys507, Cys482/Cys492, Cys514/Cys549, and Cys537/Cys567. An N-linked (GlcNAc...) asparagine glycan is attached at Asn337. N-linked (GlcNAc...) asparagine glycosylation occurs at Asn418. Asn540 carries an N-linked (GlcNAc...) asparagine glycan. Ser619 bears the Phosphoserine mark. Residues Asn625, Asn779, Asn812, and Asn828 are each glycosylated (N-linked (GlcNAc...) asparagine). Residues Gln693–Ile869 enclose the GAIN-B domain. 2 disulfides stabilise this stretch: Cys819/Cys851 and Cys839/Cys853. The GPS stretch occupies residues Cys819 to Ile869. A helical transmembrane segment spans residues Leu881–Ala901. The Cytoplasmic portion of the chain corresponds to Leu902–Arg910. The chain crosses the membrane as a helical span at residues Ser911 to Gly931. Over Gln932–Ser939 the chain is Extracellular. Asn937 carries an N-linked (GlcNAc...) asparagine glycan. The chain crosses the membrane as a helical span at residues Ile940–Leu960. The Cytoplasmic segment spans residues Thr961 to Lys981. A helical transmembrane segment spans residues Arg982–Thr1002. Residues Arg1003–Tyr1023 are Extracellular-facing. Residues Ala1024–Phe1044 traverse the membrane as a helical segment. Over Asn1045–Ser1098 the chain is Cytoplasmic. Residues Leu1099–Ala1119 form a helical membrane-spanning segment. The Extracellular segment spans residues Met1120–Ser1125. The helical transmembrane segment at Ile1126–Val1146 threads the bilayer. The Cytoplasmic segment spans residues His1147 to Val1522. Ser1220 and Ser1411 each carry phosphoserine.

The protein belongs to the G-protein coupled receptor 2 family. Adhesion G-protein coupled receptor (ADGR) subfamily. Forms a heterodimer, consisting of a large extracellular region non-covalently linked to a seven-transmembrane moiety. Interacts (via its TSRs) with C1QL1, C1QL2, C1QL3 and C1QL4. Interacts via (C-terminus) with ELMO1, ELMO2 and ELMO3. In terms of processing, the endogenous protein is proteolytically cleaved into 2 subunits, an extracellular subunit and a seven-transmembrane subunit. As to expression, brain-specific expression.

Its subcellular location is the cell membrane. Functionally, receptor that plays a role in the regulation of synaptogenesis and dendritic spine formation at least partly via interaction with ELMO1 and RAC1 activity. Promotes myoblast fusion through ELMO/DOCK1. The chain is Adhesion G protein-coupled receptor B3 (Adgrb3) from Mus musculus (Mouse).